The primary structure comprises 456 residues: tRNA-2-methylthio-N(6)-dimethylallyladenosine synthase (456 aa).

In terms of domain architecture, MTTase N-terminal spans 18–136 (EFFFIQTFGC…FPEYLHRVQV (119 aa)). The [4Fe-4S] cluster site is built by cysteine 27, cysteine 63, cysteine 97, cysteine 173, cysteine 177, and cysteine 180. The Radical SAM core domain maps to 159–391 (RKSNVKAFVT…AVNEGIVVGN (233 aa)). Residues 392 to 455 (KAAEGKIYEV…SFSLVGEVVE (64 aa)) form the TRAM domain.

This sequence belongs to the methylthiotransferase family. MiaB subfamily. In terms of assembly, monomer. [4Fe-4S] cluster serves as cofactor.

The protein localises to the cytoplasm. The enzyme catalyses N(6)-dimethylallyladenosine(37) in tRNA + (sulfur carrier)-SH + AH2 + 2 S-adenosyl-L-methionine = 2-methylsulfanyl-N(6)-dimethylallyladenosine(37) in tRNA + (sulfur carrier)-H + 5'-deoxyadenosine + L-methionine + A + S-adenosyl-L-homocysteine + 2 H(+). Catalyzes the methylthiolation of N6-(dimethylallyl)adenosine (i(6)A), leading to the formation of 2-methylthio-N6-(dimethylallyl)adenosine (ms(2)i(6)A) at position 37 in tRNAs that read codons beginning with uridine. This is tRNA-2-methylthio-N(6)-dimethylallyladenosine synthase from Clostridium botulinum (strain Alaska E43 / Type E3).